The following is a 266-amino-acid chain: Cell division protein FtsQ (266 aa).

The Cytoplasmic portion of the chain corresponds to 1–31 (MRQKTSSNKKKQKNTNNISLRRKLGLMYKKA). The chain crosses the membrane as a helical span at residues 32-52 (ILGLKIVLMIFVCLFVFTKYF). Over 53 to 266 (TSIKTYLITN…DRNKYYIQKY (214 aa)) the chain is Periplasmic. One can recognise a POTRA domain in the interval 72 to 140 (FRLENVIIEG…NTVYIKLFER (69 aa)).

It belongs to the FtsQ/DivIB family. FtsQ subfamily.

The protein localises to the cell inner membrane. Its function is as follows. Essential cell division protein. This is Cell division protein FtsQ from Rickettsia typhi (strain ATCC VR-144 / Wilmington).